The primary structure comprises 323 residues: Beta-ketoacyl-[acyl-carrier-protein] synthase III (323 aa).

Residues cysteine 113 and histidine 250 contribute to the active site. Positions 251–255 (QANKR) are ACP-binding. Residue asparagine 280 is part of the active site.

It belongs to the thiolase-like superfamily. FabH family. In terms of assembly, homodimer.

The protein resides in the cytoplasm. It carries out the reaction malonyl-[ACP] + acetyl-CoA + H(+) = 3-oxobutanoyl-[ACP] + CO2 + CoA. The protein operates within lipid metabolism; fatty acid biosynthesis. In terms of biological role, catalyzes the condensation reaction of fatty acid synthesis by the addition to an acyl acceptor of two carbons from malonyl-ACP. Catalyzes the first condensation reaction which initiates fatty acid synthesis and may therefore play a role in governing the total rate of fatty acid production. Possesses both acetoacetyl-ACP synthase and acetyl transacylase activities. Its substrate specificity determines the biosynthesis of branched-chain and/or straight-chain of fatty acids. The protein is Beta-ketoacyl-[acyl-carrier-protein] synthase III of Chelativorans sp. (strain BNC1).